A 1070-amino-acid chain; its full sequence is DNA-directed RNA polymerase subunit beta (1070 aa).

The protein belongs to the RNA polymerase beta chain family. In terms of assembly, in plastids the minimal PEP RNA polymerase catalytic core is composed of four subunits: alpha, beta, beta', and beta''. When a (nuclear-encoded) sigma factor is associated with the core the holoenzyme is formed, which can initiate transcription.

The protein localises to the plastid. Its subcellular location is the chloroplast. It catalyses the reaction RNA(n) + a ribonucleoside 5'-triphosphate = RNA(n+1) + diphosphate. Functionally, DNA-dependent RNA polymerase catalyzes the transcription of DNA into RNA using the four ribonucleoside triphosphates as substrates. The polypeptide is DNA-directed RNA polymerase subunit beta (Piper cenocladum (Ant piper)).